A 451-amino-acid polypeptide reads, in one-letter code: Chromosomal replication initiator protein DnaA (451 aa).

Positions 1-72 are domain I, interacts with DnaA modulators; the sequence is MQSIEDIWQE…ANILQEITGR (72 aa). Residues 72–108 are domain II; the sequence is RLFDVRFIDGEQEENFEYTVIKPNPALDEDGIEIGKH. The interval 109–325 is domain III, AAA+ region; that stretch reads MLNPRYVFDT…GALIRVVAYS (217 aa). Residues Gly153, Gly155, Lys156, and Thr157 each coordinate ATP. Positions 326–451 are domain IV, binds dsDNA; sequence SLVNKDITAG…KNLRKAQNMF (126 aa).

This sequence belongs to the DnaA family. As to quaternary structure, oligomerizes as a right-handed, spiral filament on DNA at oriC.

The protein resides in the cytoplasm. Plays an essential role in the initiation and regulation of chromosomal replication. ATP-DnaA binds to the origin of replication (oriC) to initiate formation of the DNA replication initiation complex once per cell cycle. Binds the DnaA box (a 9 base pair repeat at the origin) and separates the double-stranded (ds)DNA. Forms a right-handed helical filament on oriC DNA; dsDNA binds to the exterior of the filament while single-stranded (ss)DNA is stabiized in the filament's interior. The ATP-DnaA-oriC complex binds and stabilizes one strand of the AT-rich DNA unwinding element (DUE), permitting loading of DNA polymerase. After initiation quickly degrades to an ADP-DnaA complex that is not apt for DNA replication. Binds acidic phospholipids. This chain is Chromosomal replication initiator protein DnaA, found in Listeria monocytogenes serotype 4b (strain F2365).